A 118-amino-acid chain; its full sequence is Mating-type P-specific polypeptide Pc (118 aa).

Residues 29 to 97 constitute a DNA-binding region (HMG box); the sequence is KTTIYKNGFM…VRKQIAKLER (69 aa).

Its subcellular location is the nucleus. Mating type proteins are sequence specific DNA-binding proteins that act as master switches in yeast differentiation by controlling gene expression in a cell type-specific fashion. Required for conjugation and efficient meiosis. This Schizosaccharomyces kambucha (Fission yeast) protein is Mating-type P-specific polypeptide Pc (matPc).